The following is a 308-amino-acid chain: MTKTLVFGHKNPDTDTICSAISYAELKKAQGADIEAVRLGELNSETAFVLDYFQVTAPRLVETVANEVSEVALVDHNERQQSVDDIDDVTVVAVVDHHRIANFETSDPLYYRAEPVGCTTTILLKMFRENEVEVSKTVAGLMLSAIISDTLLFQSPTCTEEDKVAAEKLALIADVDIQAYGMEMLKAGADVSKKTVAELLLDAKEFNMNGSKVEIAQINVVDVNDVLSRRAEVEALMTQNIVDKGLDLYLFVITNILTNDSVGIAIGSKTAVVEEAYGVKFVENQAPLKGVVSRKKQVVPILTDTFAK.

Residues H9, D13, D15, D75, H97, and D149 each coordinate Mn(2+).

This sequence belongs to the PPase class C family. The cofactor is Mn(2+).

It localises to the cytoplasm. It catalyses the reaction diphosphate + H2O = 2 phosphate + H(+). The protein is Probable manganese-dependent inorganic pyrophosphatase of Listeria innocua serovar 6a (strain ATCC BAA-680 / CLIP 11262).